Here is a 378-residue protein sequence, read N- to C-terminus: Formate dehydrogenase 2, mitochondrial (378 aa).

A mitochondrion-targeting transit peptide spans 1–18 (MAMWRAPSAAGQLLGRAL). Substrate contacts are provided by valine 122 and asparagine 146. Residues threonine 147, 201–202 (RI), aspartate 221, 256–260 (PLTEK), asparagine 282, aspartate 308, and 332–335 (HCSG) each bind NAD(+).

It belongs to the D-isomer specific 2-hydroxyacid dehydrogenase family. FDH subfamily. Homodimer.

The protein localises to the mitochondrion. It carries out the reaction formate + NAD(+) = CO2 + NADH. Its function is as follows. Catalyzes the NAD(+)-dependent oxidation of formate to carbon dioxide. Involved in the cell stress response. The polypeptide is Formate dehydrogenase 2, mitochondrial (Oryza sativa subsp. japonica (Rice)).